The following is a 557-amino-acid chain: D-arabinono-1,4-lactone oxidase (557 aa).

The FAD-binding PCMH-type domain occupies 25 to 209 (FLCKPQAIFQ…THVTLRTCPK (185 aa)). Residues 58-61 (VGSG), 62-63 (HS), 144-148 (ISTGT), I199, and 543-546 (LSGK) contribute to the FAD site. Pros-8alpha-FAD histidine is present on H62.

The protein belongs to the oxygen-dependent FAD-linked oxidoreductase family. FAD serves as cofactor.

The catalysed reaction is D-arabinono-1,4-lactone + O2 = dehydro-D-arabinono-1,4-lactone + H2O2 + H(+). It carries out the reaction L-galactono-1,4-lactone + O2 = L-ascorbate + H2O2 + H(+). The enzyme catalyses L-gulono-1,4-lactone + O2 = L-ascorbate + H2O2 + H(+). It catalyses the reaction L-xylono-1,4-lactone + O2 = dehydro-L-arabinono-1,4-lactone + H2O2 + H(+). It functions in the pathway cofactor biosynthesis; D-erythroascorbate biosynthesis; dehydro-D-arabinono-1,4-lactone from D-arabinose: step 2/2. D-arabinono-1,4-lactone oxidase that catalyzes the final step of biosynthesis of D-erythroascorbic acid, an important antioxidant and one of the virulence factors enhancing the pathogenicity. Is also able to oxidize L-galactono-1,4-lactone, L-xylono-1,4-lactone and L-gulono-1,4-lactone. The polypeptide is D-arabinono-1,4-lactone oxidase (Candida albicans (strain SC5314 / ATCC MYA-2876) (Yeast)).